We begin with the raw amino-acid sequence, 422 residues long: Tyrosine--tRNA ligase 1 (422 aa).

Tyr35 contributes to the L-tyrosine binding site. Positions 40–49 (PTADSLHIGH) match the 'HIGH' region motif. Residues Tyr170 and Gln174 each contribute to the L-tyrosine site. The 'KMSKS' region motif lies at 232 to 236 (KFGKT). Lys235 lines the ATP pocket. The region spanning 355-421 (LSLVDVLVQS…GKKKYFLVTY (67 aa)) is the S4 RNA-binding domain.

The protein belongs to the class-I aminoacyl-tRNA synthetase family. TyrS type 1 subfamily. As to quaternary structure, homodimer.

It is found in the cytoplasm. The enzyme catalyses tRNA(Tyr) + L-tyrosine + ATP = L-tyrosyl-tRNA(Tyr) + AMP + diphosphate + H(+). In terms of biological role, catalyzes the attachment of tyrosine to tRNA(Tyr) in a two-step reaction: tyrosine is first activated by ATP to form Tyr-AMP and then transferred to the acceptor end of tRNA(Tyr). The sequence is that of Tyrosine--tRNA ligase 1 from Bacillus subtilis (strain 168).